We begin with the raw amino-acid sequence, 357 residues long: Putative electron transport protein YccM (357 aa).

Topologically, residues 1-36 (MAENKRTRWQRRPGTTGGKLPWNDWRNATTWRKATQ) are cytoplasmic. Residues 37 to 54 (LLLLAMNIYIAITFWYWV) traverse the membrane as a helical segment. The Periplasmic portion of the chain corresponds to 55-91 (RYYETASSTTFVARPGGIEGWLPIAGLMNLKYSLVTG). A helical transmembrane segment spans residues 92-114 (QLPSVHAAAMLLLVAFIVISLLL). At 115 to 158 (KKAFCSWLCPVGTLSELIGDLGNKLFGRQCVLPRWLDIPLRGVK) the chain is on the cytoplasmic side. The chain crosses the membrane as a helical span at residues 159–181 (YLLLSFFIYIALLMPAQAIHYFM). Topologically, residues 182–195 (LSPYSVVMDVKMLD) are periplasmic. A helical membrane pass occupies residues 196-218 (FFRHMGTATLISVTVLLIASLFI). Residues 219–309 (RHAWCRYLCP…KPAANKKAFA (91 aa)) are Cytoplasmic-facing. 4Fe-4S ferredoxin-type domains lie at 242–270 (FKIRRNAESCIDCGKCAKNCPSRIPVDKL) and 269–299 (KLIQVRTVECTGCMTCVESCPVASTLTFSLQ). [4Fe-4S] cluster contacts are provided by Cys251, Cys254, Cys257, Cys261, Cys278, Cys281, Cys284, and Cys288. Residues 310–332 (LSGWLMTLLVLGIMFAVIGYAMY) traverse the membrane as a helical segment. The Periplasmic segment spans residues 333–357 (AGVWQSPVPEELYRRLIPQAPMIGH).

The protein resides in the cell inner membrane. This chain is Putative electron transport protein YccM (yccM), found in Escherichia coli (strain K12).